A 156-amino-acid chain; its full sequence is RNA pyrophosphohydrolase (156 aa).

One can recognise a Nudix hydrolase domain in the interval 6–148; it reads NYRPNVAAIV…KKNIYVRVIK (143 aa). The Nudix box motif lies at 43-64; the sequence is GGIDKGESVKNALFRELKEEIG.

Belongs to the Nudix hydrolase family. RppH subfamily. A divalent metal cation is required as a cofactor.

Functionally, accelerates the degradation of transcripts by removing pyrophosphate from the 5'-end of triphosphorylated RNA, leading to a more labile monophosphorylated state that can stimulate subsequent ribonuclease cleavage. In Campylobacter jejuni subsp. jejuni serotype O:2 (strain ATCC 700819 / NCTC 11168), this protein is RNA pyrophosphohydrolase.